A 198-amino-acid polypeptide reads, in one-letter code: dTTP/UTP pyrophosphatase (198 aa).

Asp76 (proton acceptor) is an active-site residue.

This sequence belongs to the Maf family. YhdE subfamily. A divalent metal cation is required as a cofactor.

The protein resides in the cytoplasm. The enzyme catalyses dTTP + H2O = dTMP + diphosphate + H(+). It catalyses the reaction UTP + H2O = UMP + diphosphate + H(+). Nucleoside triphosphate pyrophosphatase that hydrolyzes dTTP and UTP. May have a dual role in cell division arrest and in preventing the incorporation of modified nucleotides into cellular nucleic acids. The chain is dTTP/UTP pyrophosphatase from Shewanella denitrificans (strain OS217 / ATCC BAA-1090 / DSM 15013).